A 220-amino-acid chain; its full sequence is MNRLIILCLVAATIYSTIALPMKEDISNEERPTSVNEKPVKKSVAVAGAVIQGAALAFQVLDKILTSLGGIGRKIAIGVDNESGMKWAARNVYFYSGTSDTVLPYSVPHSKAFLYGARKTRGSVRGAVGVLAYSMSDGNTLGILFSVPYDYNWYSNWWNIKVYRGYKRANKWMYHDLYYYARPHKGNNEWHEKSLGYGLKSKGFMTSSGQTKLEIRVSRA.

Positions 1–19 (MNRLIILCLVAATIYSTIA) are cleaved as a signal peptide. Positions 20–42 (LPMKEDISNEERPTSVNEKPVKK) are excised as a propeptide. 7 residues coordinate phosphocholine: serine 96, valine 128, serine 146, proline 148, tyrosine 174, tyrosine 178, and tyrosine 179. Residues 146 to 161 (SVPYDYNWYSNWWNIK) form a trp-rich region, which is important for the binding to lipid membrane region. The Cell attachment site, crucial for protein stability motif lies at 185–187 (KGN).

It belongs to the actinoporin family. Sea anemone subfamily. In terms of assembly, octamer or nonamer in membranes. Monomer in the soluble state. In terms of tissue distribution, expressed in tentacles.

Its subcellular location is the secreted. The protein localises to the nematocyst. The protein resides in the target cell membrane. Probably acts in predation. Pore-forming protein that forms cations-selective hydrophilic pores of around 1 nm and causes cytolysis. Pore formation is a multi-step process that involves specific recognition of membrane sphingomyelin (but neither cholesterol nor phosphatidylcholine) using aromatic rich region and adjacent phosphocholine (POC) binding site, firm binding to the membrane (mainly driven by hydrophobic interactions) accompanied by the transfer of the N-terminal region to the lipid-water interface and finally pore formation after oligomerization of monomers. Shows hemolytic activity on equine erythrocytes. Hemolysis is moderately inhibited in presence of sphingomyelin, suggesting that this protein targets sphingomyelin. This is Deep-sea actinoporin Cjtox I from Cribrinopsis japonica (Deep-sea anemone).